The sequence spans 549 residues: Biotin-dependent acetyl-/propionyl-coenzyme A carboxylase beta5 subunit (549 aa).

Positions 25 to 281 (TAGKLAELHK…NNFTDAPRYS (257 aa)) constitute a CoA carboxyltransferase N-terminal domain. In terms of domain architecture, CoA carboxyltransferase C-terminal spans 295–542 (AKDLELDTLI…ERKIAHLPPK (248 aa)).

It belongs to the AccD/PCCB family. The biotin-dependent acyl-CoA carboxylase complex is composed of AccA3, which contains the biotin carboxylase (BC) and biotin carboxyl carrier protein (BCCP) domains, and AccD5, which contains the carboxyl transferase (CT) domain.

It catalyses the reaction N(6)-carboxybiotinyl-L-lysyl-[protein] + acetyl-CoA = N(6)-biotinyl-L-lysyl-[protein] + malonyl-CoA. It carries out the reaction N(6)-carboxybiotinyl-L-lysyl-[protein] + propanoyl-CoA = methylmalonyl-CoA + N(6)-biotinyl-L-lysyl-[protein]. It participates in lipid metabolism; mycolic acid biosynthesis. Component of a biotin-dependent acyl-CoA carboxylase complex. This subunit transfers the CO2 from carboxybiotin to the CoA ester substrate. When associated with the alpha3 subunit AccA3, is involved in the carboxylation of acetyl-CoA and propionyl-CoA. The polypeptide is Biotin-dependent acetyl-/propionyl-coenzyme A carboxylase beta5 subunit (accD5) (Mycobacterium leprae (strain TN)).